The chain runs to 325 residues: MNALTAVQNNAVDSGQDYSGFTLIPSAQSPRLPELTFTEQTTNRFLEQVAEWPVQALEYKSFLRFRVGKILDDLCANQLQPLLLKTLLNRAEGALLINAVGIDDVAQADEMVKLATAVAHLIGRSNFDAMSGQYYARFVVKNVDNSDSYLRQPHRVMELHNDGTYVEEITDYVLMMKIDEQNMQGGNSLLLHLDDWEHLDLFFRHPLARRPMRFAAPPSKNVSKDVFYPVFDVDQQGRPVMRYIDQFVQPKDFEEGVWLSELSDAIETSKGILSVPVPVGKFLLINNLFWLHGRDRFTPHPDLRRELMRQRGYFAYATHHYQTHQ.

Residues histidine 160, aspartate 162, and histidine 292 each contribute to the Fe cation site.

It belongs to the glutarate hydroxylase family. As to quaternary structure, homotetramer. Requires Fe(2+) as cofactor.

The enzyme catalyses glutarate + 2-oxoglutarate + O2 = (S)-2-hydroxyglutarate + succinate + CO2. The protein operates within amino-acid degradation. Functionally, acts as an alpha-ketoglutarate-dependent dioxygenase catalyzing hydroxylation of glutarate (GA) to L-2-hydroxyglutarate (L2HG). Functions in a L-lysine degradation pathway that proceeds via cadaverine, glutarate and L-2-hydroxyglutarate. This Escherichia coli O127:H6 (strain E2348/69 / EPEC) protein is Glutarate 2-hydroxylase.